A 227-amino-acid chain; its full sequence is Cytochrome c oxidase subunit 2 (227 aa).

Topologically, residues 1–14 (MTHPLQLGFQDATS) are mitochondrial intermembrane. The helical transmembrane segment at 15–45 (PIMEELLHFHDHTLMIVFLISSLVLYIITLM) threads the bilayer. Residues 46–59 (LTTKLTHTSTMDAQ) are Mitochondrial matrix-facing. A helical membrane pass occupies residues 60–87 (EVETVWTILPAIILILIALPSLRILYMM). Over 88 to 227 (DEINNPLLTV…YFEDWSVSMT (140 aa)) the chain is Mitochondrial intermembrane. H161, C196, E198, C200, H204, and M207 together coordinate Cu cation. Residue E198 participates in Mg(2+) binding. The residue at position 218 (Y218) is a Phosphotyrosine.

Belongs to the cytochrome c oxidase subunit 2 family. In terms of assembly, component of the cytochrome c oxidase (complex IV, CIV), a multisubunit enzyme composed of 14 subunits. The complex is composed of a catalytic core of 3 subunits MT-CO1, MT-CO2 and MT-CO3, encoded in the mitochondrial DNA, and 11 supernumerary subunits COX4I, COX5A, COX5B, COX6A, COX6B, COX6C, COX7A, COX7B, COX7C, COX8 and NDUFA4, which are encoded in the nuclear genome. The complex exists as a monomer or a dimer and forms supercomplexes (SCs) in the inner mitochondrial membrane with NADH-ubiquinone oxidoreductase (complex I, CI) and ubiquinol-cytochrome c oxidoreductase (cytochrome b-c1 complex, complex III, CIII), resulting in different assemblies (supercomplex SCI(1)III(2)IV(1) and megacomplex MCI(2)III(2)IV(2)). Found in a complex with TMEM177, COA6, COX18, COX20, SCO1 and SCO2. Interacts with TMEM177 in a COX20-dependent manner. Interacts with COX20. Interacts with COX16. Requires Cu cation as cofactor.

The protein resides in the mitochondrion inner membrane. The enzyme catalyses 4 Fe(II)-[cytochrome c] + O2 + 8 H(+)(in) = 4 Fe(III)-[cytochrome c] + 2 H2O + 4 H(+)(out). Its function is as follows. Component of the cytochrome c oxidase, the last enzyme in the mitochondrial electron transport chain which drives oxidative phosphorylation. The respiratory chain contains 3 multisubunit complexes succinate dehydrogenase (complex II, CII), ubiquinol-cytochrome c oxidoreductase (cytochrome b-c1 complex, complex III, CIII) and cytochrome c oxidase (complex IV, CIV), that cooperate to transfer electrons derived from NADH and succinate to molecular oxygen, creating an electrochemical gradient over the inner membrane that drives transmembrane transport and the ATP synthase. Cytochrome c oxidase is the component of the respiratory chain that catalyzes the reduction of oxygen to water. Electrons originating from reduced cytochrome c in the intermembrane space (IMS) are transferred via the dinuclear copper A center (CU(A)) of subunit 2 and heme A of subunit 1 to the active site in subunit 1, a binuclear center (BNC) formed by heme A3 and copper B (CU(B)). The BNC reduces molecular oxygen to 2 water molecules using 4 electrons from cytochrome c in the IMS and 4 protons from the mitochondrial matrix. This chain is Cytochrome c oxidase subunit 2 (MT-CO2), found in Carlito syrichta (Philippine tarsier).